The following is a 227-amino-acid chain: Putative molybdenum transport system permease protein YvgM (227 aa).

A run of 5 helical transmembrane segments spans residues 17-37, 57-77, 94-114, 142-162, and 201-221; these read VVLS…LGTL, FMLP…VIFG, VIFT…PLMY, VFIH…SILS, and TLAW…LFFI. The ABC transmembrane type-1 domain occupies 17 to 221; it reads VVLSFQVAAV…VISFLMLFFI (205 aa).

Belongs to the binding-protein-dependent transport system permease family. CysTW subfamily.

Its subcellular location is the cell membrane. Could be part of the binding-protein-dependent transport system for molybdenum; probably responsible for the translocation of the substrate across the membrane. The chain is Putative molybdenum transport system permease protein YvgM (yvgM) from Bacillus subtilis (strain 168).